The following is a 730-amino-acid chain: Catalase-peroxidase (730 aa).

The tryptophyl-tyrosyl-methioninium (Trp-Tyr) (with M-251) cross-link spans 92 to 225; the sequence is WHSAGTYRSI…LSAVHMGLIY (134 aa). H93 (proton acceptor) is an active-site residue. The tryptophyl-tyrosyl-methioninium (Tyr-Met) (with W-92) cross-link spans 225–251; that stretch reads YVNPEGPDGIPDPVASARDIRTTFRRM. A heme b-binding site is contributed by H266.

The protein belongs to the peroxidase family. Peroxidase/catalase subfamily. In terms of assembly, homodimer or homotetramer. Heme b serves as cofactor. Post-translationally, formation of the three residue Trp-Tyr-Met cross-link is important for the catalase, but not the peroxidase activity of the enzyme.

It localises to the cytoplasm. It catalyses the reaction H2O2 + AH2 = A + 2 H2O. The enzyme catalyses 2 H2O2 = O2 + 2 H2O. Functionally, bifunctional enzyme with both catalase and broad-spectrum peroxidase activity. The chain is Catalase-peroxidase from Blumeria hordei (Barley powdery mildew).